The following is a 513-amino-acid chain: Xylose import ATP-binding protein XylG (513 aa).

2 consecutive ABC transporter domains span residues 5–242 (LEMK…VGRE) and 259–505 (LRIE…LRSE). Residue 37-44 (GENGSGKS) participates in ATP binding.

It belongs to the ABC transporter superfamily. Xylose importer (TC 3.A.1.2.4) family. In terms of assembly, the complex is composed of two ATP-binding proteins (XylG), two transmembrane proteins (XylH) and a solute-binding protein (XylF).

Its subcellular location is the cell inner membrane. It carries out the reaction D-xylose(out) + ATP + H2O = D-xylose(in) + ADP + phosphate + H(+). Its function is as follows. Part of the ABC transporter complex XylFGH involved in xylose import. Responsible for energy coupling to the transport system. This Escherichia coli O6:K15:H31 (strain 536 / UPEC) protein is Xylose import ATP-binding protein XylG.